A 437-amino-acid polypeptide reads, in one-letter code: Cobyrinate a,c-diamide synthase (437 aa).

The 190-residue stretch at 241-430 (KIAVAKDEAF…AHVHFFGNLD (190 aa)) folds into the GATase cobBQ-type domain. The Nucleophile role is filled by Cys323.

The protein belongs to the CobB/CbiA family. Requires Mg(2+) as cofactor.

It catalyses the reaction cob(II)yrinate + 2 L-glutamine + 2 ATP + 2 H2O = cob(II)yrinate a,c diamide + 2 L-glutamate + 2 ADP + 2 phosphate + 2 H(+). It participates in cofactor biosynthesis; adenosylcobalamin biosynthesis; cob(II)yrinate a,c-diamide from sirohydrochlorin (anaerobic route): step 10/10. Catalyzes the ATP-dependent amidation of the two carboxylate groups at positions a and c of cobyrinate, using either L-glutamine or ammonia as the nitrogen source. The protein is Cobyrinate a,c-diamide synthase of Clostridium acetobutylicum (strain ATCC 824 / DSM 792 / JCM 1419 / IAM 19013 / LMG 5710 / NBRC 13948 / NRRL B-527 / VKM B-1787 / 2291 / W).